A 110-amino-acid chain; its full sequence is Large ribosomal subunit protein uL22 (110 aa).

It belongs to the universal ribosomal protein uL22 family. In terms of assembly, part of the 50S ribosomal subunit.

Its function is as follows. This protein binds specifically to 23S rRNA; its binding is stimulated by other ribosomal proteins, e.g. L4, L17, and L20. It is important during the early stages of 50S assembly. It makes multiple contacts with different domains of the 23S rRNA in the assembled 50S subunit and ribosome. The globular domain of the protein is located near the polypeptide exit tunnel on the outside of the subunit, while an extended beta-hairpin is found that lines the wall of the exit tunnel in the center of the 70S ribosome. In Baumannia cicadellinicola subsp. Homalodisca coagulata, this protein is Large ribosomal subunit protein uL22.